Reading from the N-terminus, the 537-residue chain is Chaperonin GroEL 3 (537 aa).

ATP is bound by residues 30 to 33, 87 to 91, G414, 480 to 482, and D496; these read TLGP, DGTTT, and DAL.

The protein belongs to the chaperonin (HSP60) family. As to quaternary structure, forms a cylinder of 14 subunits composed of two heptameric rings stacked back-to-back. Interacts with the co-chaperonin GroES.

It is found in the cytoplasm. It catalyses the reaction ATP + H2O + a folded polypeptide = ADP + phosphate + an unfolded polypeptide.. Functionally, together with its co-chaperonin GroES, plays an essential role in assisting protein folding. The GroEL-GroES system forms a nano-cage that allows encapsulation of the non-native substrate proteins and provides a physical environment optimized to promote and accelerate protein folding. The polypeptide is Chaperonin GroEL 3 (Acaryochloris marina (strain MBIC 11017)).